A 98-amino-acid chain; its full sequence is Large ribosomal subunit protein bL25 (98 aa).

The segment at 1–22 is disordered; that stretch reads MANFVLNATARNEDKQGKGASR.

This sequence belongs to the bacterial ribosomal protein bL25 family. In terms of assembly, part of the 50S ribosomal subunit; part of the 5S rRNA/L5/L18/L25 subcomplex. Contacts the 5S rRNA. Binds to the 5S rRNA independently of L5 and L18.

In terms of biological role, this is one of the proteins that binds to the 5S RNA in the ribosome where it forms part of the central protuberance. This is Large ribosomal subunit protein bL25 from Acinetobacter baylyi (strain ATCC 33305 / BD413 / ADP1).